A 441-amino-acid polypeptide reads, in one-letter code: tRNA(Ile)-lysidine synthase (441 aa).

Ser28–Ser33 lines the ATP pocket.

It belongs to the tRNA(Ile)-lysidine synthase family.

The protein localises to the cytoplasm. It carries out the reaction cytidine(34) in tRNA(Ile2) + L-lysine + ATP = lysidine(34) in tRNA(Ile2) + AMP + diphosphate + H(+). Functionally, ligates lysine onto the cytidine present at position 34 of the AUA codon-specific tRNA(Ile) that contains the anticodon CAU, in an ATP-dependent manner. Cytidine is converted to lysidine, thus changing the amino acid specificity of the tRNA from methionine to isoleucine. The protein is tRNA(Ile)-lysidine synthase of Orientia tsutsugamushi (strain Boryong) (Rickettsia tsutsugamushi).